A 1682-amino-acid chain; its full sequence is MLASPEPKGLVPFTKESFELIKQHIAKTHNEDHEEEDLKPTPDLEVGKKLPFIYGNLSQGMVSEPLEDVDPYYYKKKNTFIVLNKNRTIFRFNAASILCTLSPFNCIRRTTIKVLVHPFFQLFILISVLIDCVFMSLTNLPKWRPVLENTLLGIYTFEILVKLFARGVWAGSFSFLGDPWNWLDFSVTVFEVIIRYSPLDFIPTLQTARTLRILKIIPLNQGLKSLVGVLIHCLKQLIGVIILTLFFLSIFSLIGMGLFMGNLKHKCFRWPQENENETLHNRTGNPYYIRETENFYYLEGERYALLCGNRTDAGQCPEGYVCVKAGINPDQGFTNFDSFGWALFALFRLMAQDYPEVLYHQILYASGKVYMIFFVVVSFLFSFYMASLFLGILAMAYEEEKQRVGEISKKIEPKFQQTGKELQEGNETDEAKTIQIEMKKRSPISTDTSLDVLEDATLRHKEELEKSKKICPLYWYKFAKTFLIWNCSPCWLKLKEFVHRIIMAPFTDLFLIICIILNVCFLTLEHYPMSKQTNTLLNIGNLVFIGIFTAEMIFKIIAMHPYGYFQVGWNIFDSMIVFHGLIELCLANVAGMALLRLFRMLRIFKLGKYWPTFQILMWSLSNSWVALKDLVLLLFTFIFFSAAFGMKLFGKNYEEFVCHIDKDCQLPRWHMHDFFHSFLNVFRILCGEWVETLWDCMEVAGQSWCIPFYLMVILIGNLLVLYLFLALVSSFSSCKDVTAEENNEAKNLQLAVARIKKGINYVLLKILCKTQNVPKDTMDHVNEVYVKEDISDHTLSELSNTQDFLKDKEKSSGTEKNATENESQSLIPSPSVSETVPIASGESDIENLDNKEIQSKSGDGGSKEKIKQSSSSECSTVDIAISEEEEMFYGGERSKHLKNGCRRGSSLGQISGASKKGKIWQNIRKTCCKIVENNWFKCFIGLVTLLSTGTLAFEDIYMDQRKTIKILLEYADMIFTYIFILEMLLKWMAYGFKAYFSNGWYRLDFVVVIVFCLSLIGKTREELKPLISMKFLRPLRVLSQFERMKVVVRALIKTTLPTLNVFLVCLMIWLIFSIMGVDLFAGRFYECIDPTSGERFPSSEVMNKSRCESLLFNESMLWENAKMNFDNVGNGFLSLLQVATFNGWITIMNSAIDSVAVNIQPHFEVNIYMYCYFINFIIFGVFLPLSMLITVIIDNFNKHKIKLGGSNIFITVKQRKQYRRLKKLMYEDSQRPVPRPLNKLQGFIFDVVTSQAFNVIVMVLICFQAIAMMIDTDVQSLQMSIALYWINSIFVMLYTMECILKLIAFRCFYFTIAWNIFDFMVVIFSITGLCLPMTVGSYLVPPSLVQLILLSRIIHMLRLGKGPKVFHNLMLPLMLSLPALLNIILLIFLVMFIYAVFGMYNFAYVKKEAGINDVSNFETFGNSMLCLFQVAIFAGWDGMLDAIFNSKWSDCDPDKINPGTQVRGDCGNPSVGIFYFVSYILISWLIIVNMYIVVVMEFLNIASKKKNKTLSEDDFRKFFQVWKRFDPDRTQYIDSSKLSDFAAALDPPLFMAKPNKGQLIALDLPMAVGDRIHCLDILLAFTKRVMGQDVRMEKVVSEIESGFLLANPFKITCEPITTTLKRKQEAVSATIIQRAYKNYRLRRNDKNTSDIHMIDGDRDVHATKEGAYFDKAKEKSPIQSQI.

Residues 1–117 (MLASPEPKGL…RRTTIKVLVH (117 aa)) lie on the Cytoplasmic side of the membrane. Residues 100 to 401 (TLSPFNCIRR…ILAMAYEEEK (302 aa)) form an I repeat. The helical transmembrane segment at 118-137 (PFFQLFILISVLIDCVFMSL) threads the bilayer. The Extracellular portion of the chain corresponds to 138–141 (TNLP). Residues 142–167 (KWRPVLENTLLGIYTFEILVKLFARG) form a helical membrane-spanning segment. Topologically, residues 168–178 (VWAGSFSFLGD) are cytoplasmic. A helical transmembrane segment spans residues 179 to 196 (PWNWLDFSVTVFEVIIRY). The Extracellular portion of the chain corresponds to 197–200 (SPLD). Residues 201 to 219 (FIPTLQTARTLRILKIIPL) traverse the membrane as a helical segment. Over 220 to 237 (NQGLKSLVGVLIHCLKQL) the chain is Cytoplasmic. A helical membrane pass occupies residues 238–259 (IGVIILTLFFLSIFSLIGMGLF). The Extracellular portion of the chain corresponds to 260–338 (MGNLKHKCFR…PDQGFTNFDS (79 aa)). Cysteine 267 and cysteine 307 are oxidised to a cystine. 3 N-linked (GlcNAc...) asparagine glycosylation sites follow: asparagine 276, asparagine 281, and asparagine 309. An intramembrane region (pore-forming) is located at residues 339-366 (FGWALFALFRLMAQDYPEVLYHQILYAS). Glycine 367 is a topological domain (extracellular). A helical membrane pass occupies residues 368 to 407 (KVYMIFFVVVSFLFSFYMASLFLGILAMAYEEEKQRVGEI). Residues 408–505 (SKKIEPKFQQ…EFVHRIIMAP (98 aa)) are Cytoplasmic-facing. The residue at position 442 (serine 442) is a Phosphoserine; by PKA. The stretch at 487-758 (CSPCWLKLKE…QLAVARIKKG (272 aa)) is one II repeat. Residues 506–521 (FTDLFLIICIILNVCF) form a helical membrane-spanning segment. Over 522–530 (LTLEHYPMS) the chain is Extracellular. A helical membrane pass occupies residues 531–559 (KQTNTLLNIGNLVFIGIFTAEMIFKIIAM). Over 560–568 (HPYGYFQVG) the chain is Cytoplasmic. A helical transmembrane segment spans residues 569 to 586 (WNIFDSMIVFHGLIELCL). Residues 587–592 (ANVAGM) are Extracellular-facing. A helical membrane pass occupies residues 593-609 (ALLRLFRMLRIFKLGKY). Residues 610–626 (WPTFQILMWSLSNSWVA) lie on the Cytoplasmic side of the membrane. A helical transmembrane segment spans residues 627–655 (LKDLVLLLFTFIFFSAAFGMKLFGKNYEE). Topologically, residues 656–673 (FVCHIDKDCQLPRWHMHD) are extracellular. Cystine bridges form between cysteine 658–cysteine 664 and cysteine 696–cysteine 705. The pore-forming intramembrane region spans 674–700 (FFHSFLNVFRILCGEWVETLWDCMEVA). A topological domain (extracellular) is located at residue glycine 701. The chain crosses the membrane as a helical span at residues 702–732 (QSWCIPFYLMVILIGNLLVLYLFLALVSSFS). At 733–934 (SCKDVTAEEN…KTCCKIVENN (202 aa)) the chain is on the cytoplasmic side. Position 777 is a phosphothreonine; by PKA (threonine 777). The segment at 801 to 871 (TQDFLKDKEK…SKEKIKQSSS (71 aa)) is disordered. Residues 804-819 (FLKDKEKSSGTEKNAT) are compositionally biased toward basic and acidic residues. Residues 820–834 (ENESQSLIPSPSVSE) show a composition bias toward polar residues. Phosphoserine is present on serine 843. Phosphoserine; by PKA occurs at positions 869 and 905. The stretch at 916–1224 (KGKIWQNIRK…RKQYRRLKKL (309 aa)) is one III repeat. Residues 935 to 953 (WFKCFIGLVTLLSTGTLAF) traverse the membrane as a helical segment. The Extracellular portion of the chain corresponds to 954–961 (EDIYMDQR). The helical transmembrane segment at 962 to 990 (KTIKILLEYADMIFTYIFILEMLLKWMAY) threads the bilayer. Residues 991–998 (GFKAYFSN) lie on the Cytoplasmic side of the membrane. Residues 999–1020 (GWYRLDFVVVIVFCLSLIGKTR) form a helical membrane-spanning segment. Glutamate 1021 is a topological domain (extracellular). A helical transmembrane segment spans residues 1022–1040 (ELKPLISMKFLRPLRVLSQ). Over 1041 to 1055 (FERMKVVVRALIKTT) the chain is Cytoplasmic. The helical transmembrane segment at 1056 to 1080 (LPTLNVFLVCLMIWLIFSIMGVDLF) threads the bilayer. At 1081-1127 (AGRFYECIDPTSGERFPSSEVMNKSRCESLLFNESMLWENAKMNFDN) the chain is on the extracellular side. A disulfide bridge links cysteine 1087 with cysteine 1107. Asparagine 1103 and asparagine 1113 each carry an N-linked (GlcNAc...) asparagine glycan. An intramembrane region (pore-forming) is located at residues 1128-1154 (VGNGFLSLLQVATFNGWITIMNSAIDS). At 1155-1167 (VAVNIQPHFEVNI) the chain is on the extracellular side. A helical membrane pass occupies residues 1168 to 1202 (YMYCYFINFIIFGVFLPLSMLITVIIDNFNKHKIK). The Cytoplasmic portion of the chain corresponds to 1203–1250 (LGGSNIFITVKQRKQYRRLKKLMYEDSQRPVPRPLNKLQGFIFDVVTS). The stretch at 1233–1531 (VPRPLNKLQG…WKRFDPDRTQ (299 aa)) is one IV repeat. Residues 1251-1272 (QAFNVIVMVLICFQAIAMMIDT) form a helical membrane-spanning segment. The Extracellular portion of the chain corresponds to 1273-1276 (DVQS). The helical transmembrane segment at 1277–1305 (LQMSIALYWINSIFVMLYTMECILKLIAF) threads the bilayer. Over 1306–1312 (RCFYFTI) the chain is Cytoplasmic. A helical membrane pass occupies residues 1313–1338 (AWNIFDFMVVIFSITGLCLPMTVGSY). At 1339–1341 (LVP) the chain is on the extracellular side. Residues 1342–1362 (PSLVQLILLSRIIHMLRLGKG) form a helical membrane-spanning segment. The Cytoplasmic segment spans residues 1363–1377 (PKVFHNLMLPLMLSL). The chain crosses the membrane as a helical span at residues 1378 to 1402 (PALLNIILLIFLVMFIYAVFGMYNF). Residues 1403–1420 (AYVKKEAGINDVSNFETF) lie on the Extracellular side of the membrane. The segment at residues 1421–1444 (GNSMLCLFQVAIFAGWDGMLDAIF) is an intramembrane region (pore-forming). Residues 1445–1468 (NSKWSDCDPDKINPGTQVRGDCGN) are Extracellular-facing. A disulfide bridge connects residues cysteine 1451 and cysteine 1466. The helical transmembrane segment at 1469-1504 (PSVGIFYFVSYILISWLIIVNMYIVVVMEFLNIASK) threads the bilayer. Topologically, residues 1505–1682 (KKNKTLSEDD…KEKSPIQSQI (178 aa)) are cytoplasmic.

It belongs to the sodium channel (TC 1.A.1.10) family. SCN7A subfamily. As to quaternary structure, the sodium channel formed by SCN7A is probably a heterooligomeric complex consisting of the ion conducting pore forming alpha subunit SCN7A and regulatory beta subunits such as SCN3B. Interacts with ATP1A1; activates ATP1A1 and thereby indirectly signals to nearby neurons to regulate sodium homeostasis. Heart and uterus.

It localises to the cell membrane. The catalysed reaction is Na(+)(in) = Na(+)(out). Functionally, sodium leak channel functioning as an osmosensor regulating sodium ion levels in various tissues and organs. While most sodium channels are voltage-gated, SCN7A is not and lets sodium flow through membrane along its concentration gradient. In glial cells of the central nervous system, senses body-fluid sodium levels and controls salt intake behavior as well as voluntary water intake through activation of nearby neurons to maintain appropriate sodium levels in the body. By mediating sodium influx into keratinocytes, also plays a role in skin barrier homeostasis. This Homo sapiens (Human) protein is Sodium channel protein type 7 subunit alpha.